A 790-amino-acid polypeptide reads, in one-letter code: Type VI secretion system spike protein VgrG5 (790 aa).

Composition is skewed to basic and acidic residues over residues 753 to 763 and 772 to 790; these read GFRDYRAEMPQ and AYRR…EPTP. The segment at 753–790 is disordered; the sequence is GFRDYRAEMPQHKPRSAPDAYRRDASRPGAADKDEPTP.

It belongs to the VgrG protein family.

It localises to the secreted. In terms of biological role, part of the H2 type VI secretion system (H2-T6SS) specialized secretion system, which delivers several virulence factors in both prokaryotic and eukaryotic cells during infection. Allows the delivery of the phospholipase effector PldB to target cells where it exerts its toxicity. Also plays a role in VgrG4b and its effector PldA secretion. In Pseudomonas aeruginosa (strain ATCC 15692 / DSM 22644 / CIP 104116 / JCM 14847 / LMG 12228 / 1C / PRS 101 / PAO1), this protein is Type VI secretion system spike protein VgrG5.